The following is a 193-amino-acid chain: MRLCDTDIERHLDEGKIVIEPRPGVERISGVSVDVLLGNEFRVFRDHTAPYIDLSGPNSEMADAIDRVMSDEIHIPDGEAFYLHPGQLALAVTYESVTLPADIVGWLDGRSSLARLGLMVHVTAHRIDPGWSGRIVLEFYNGGKLPLALRPKMKIGALNFEMLSGPAARPYNKRENAKYKSQQGAVASRINQD.

Residues 110 to 115, aspartate 128, 136 to 138, tyrosine 171, lysine 178, and glutamine 182 each bind dCTP; these read RSSLAR and VLE. The Proton donor/acceptor role is filled by glutamate 138.

Belongs to the dCTP deaminase family. As to quaternary structure, homotrimer.

It catalyses the reaction dCTP + H2O + H(+) = dUTP + NH4(+). The protein operates within pyrimidine metabolism; dUMP biosynthesis; dUMP from dCTP (dUTP route): step 1/2. Functionally, catalyzes the deamination of dCTP to dUTP. In Aeromonas salmonicida (strain A449), this protein is dCTP deaminase.